Consider the following 119-residue polypeptide: V-type proton ATPase subunit F (119 aa).

This sequence belongs to the V-ATPase F subunit family. In terms of assembly, V-ATPase is a heteromultimeric enzyme made up of two complexes: the ATP-hydrolytic V1 complex and the proton translocation V0 complex. The V1 complex consists of three catalytic AB heterodimers that form a heterohexamer, three peripheral stalks each consisting of EG heterodimers, one central rotor including subunits D and F, and the regulatory subunits C and H. The proton translocation complex V0 consists of the proton transport subunit a, a ring of proteolipid subunits c9c'', rotary subunit d, subunits e and f, and the accessory subunits ATP6AP1/Ac45 and ATP6AP2/PRR.

It localises to the cytoplasmic vesicle. The protein resides in the secretory vesicle. It is found in the synaptic vesicle membrane. The protein localises to the clathrin-coated vesicle membrane. Functionally, subunit of the V1 complex of vacuolar(H+)-ATPase (V-ATPase), a multisubunit enzyme composed of a peripheral complex (V1) that hydrolyzes ATP and a membrane integral complex (V0) that translocates protons. V-ATPase is responsible for acidifying and maintaining the pH of intracellular compartments and in some cell types, is targeted to the plasma membrane, where it is responsible for acidifying the extracellular environment. In Mus musculus (Mouse), this protein is V-type proton ATPase subunit F (Atp6v1f).